A 411-amino-acid chain; its full sequence is Tyrosine--tRNA ligase (411 aa).

Tyr-34 lines the L-tyrosine pocket. Residues Cys-39–Ser-48 carry the 'HIGH' region motif. L-tyrosine contacts are provided by Tyr-171 and Gln-175. Positions Lys-231–Thr-235 match the 'KMSKS' region motif. Residue Lys-234 coordinates ATP. An S4 RNA-binding domain is found at Ile-345–Val-411.

It belongs to the class-I aminoacyl-tRNA synthetase family. TyrS type 1 subfamily. As to quaternary structure, homodimer.

Its subcellular location is the cytoplasm. It carries out the reaction tRNA(Tyr) + L-tyrosine + ATP = L-tyrosyl-tRNA(Tyr) + AMP + diphosphate + H(+). Catalyzes the attachment of tyrosine to tRNA(Tyr) in a two-step reaction: tyrosine is first activated by ATP to form Tyr-AMP and then transferred to the acceptor end of tRNA(Tyr). In Rickettsia conorii (strain ATCC VR-613 / Malish 7), this protein is Tyrosine--tRNA ligase.